A 439-amino-acid polypeptide reads, in one-letter code: Ribosomal protein uS12 methylthiotransferase RimO (439 aa).

In terms of domain architecture, MTTase N-terminal spans H3–P113. Residues C12, C48, C77, C144, C148, and C151 each coordinate [4Fe-4S] cluster. The Radical SAM core domain maps to L130 to N367. One can recognise a TRAM domain in the interval K370–Y436.

This sequence belongs to the methylthiotransferase family. RimO subfamily. It depends on [4Fe-4S] cluster as a cofactor.

It localises to the cytoplasm. It catalyses the reaction L-aspartate(89)-[ribosomal protein uS12]-hydrogen + (sulfur carrier)-SH + AH2 + 2 S-adenosyl-L-methionine = 3-methylsulfanyl-L-aspartate(89)-[ribosomal protein uS12]-hydrogen + (sulfur carrier)-H + 5'-deoxyadenosine + L-methionine + A + S-adenosyl-L-homocysteine + 2 H(+). Functionally, catalyzes the methylthiolation of an aspartic acid residue of ribosomal protein uS12. The protein is Ribosomal protein uS12 methylthiotransferase RimO of Legionella pneumophila (strain Paris).